The chain runs to 210 residues: Large ribosomal subunit protein uL3 (210 aa).

A disordered region spans residues 125–154; it reads RHGFRGGPKTHGQSDRHRAPGSIGAGTTPG.

This sequence belongs to the universal ribosomal protein uL3 family. Part of the 50S ribosomal subunit. Forms a cluster with proteins L14 and L19.

One of the primary rRNA binding proteins, it binds directly near the 3'-end of the 23S rRNA, where it nucleates assembly of the 50S subunit. This Chloroflexus aggregans (strain MD-66 / DSM 9485) protein is Large ribosomal subunit protein uL3.